The primary structure comprises 31 residues: Superoxide dismutase [Cu-Zn] (31 aa).

It belongs to the Cu-Zn superoxide dismutase family. Cu cation is required as a cofactor. Zn(2+) serves as cofactor.

The protein resides in the cytoplasm. The enzyme catalyses 2 superoxide + 2 H(+) = H2O2 + O2. Its function is as follows. Destroys radicals which are normally produced within the cells and which are toxic to biological systems. The chain is Superoxide dismutase [Cu-Zn] from Striga hermonthica (Purple witchweed).